We begin with the raw amino-acid sequence, 841 residues long: Translation initiation factor IF-2 (841 aa).

The tract at residues 94–258 (QRSPEEIEAE…HGFQSPTGPV (165 aa)) is disordered. A compositionally biased stretch (basic and acidic residues) spans 96–136 (SPEEIEAERKRELEERRAVENAARQKAEEEAKRRAEEEARR). Low complexity predominate over residues 137–173 (QPAAAQPAGTEAVAAPVAPVEAVREAAPVAAAPAPAA). Composition is skewed to basic and acidic residues over residues 174–194 (DARKRDEPRRPDKPRADDNNR), 200–217 (DGERKNAPHRASVKEKAP), and 225–234 (TTDEESDGFR). A compositionally biased stretch (basic residues) spans 235–248 (RGGRGKAKLKKRNA). Residues 341–510 (SRAPVVTVMG…LLQAEVLELK (170 aa)) form the tr-type G domain. The tract at residues 350–357 (GHVDHGKT) is G1. 350 to 357 (GHVDHGKT) is a binding site for GTP. Residues 375-379 (GITQH) are G2. The interval 396-399 (DTPG) is G3. GTP contacts are provided by residues 396–400 (DTPGH) and 450–453 (NKID). A G4 region spans residues 450–453 (NKID). Positions 486–488 (SAK) are G5.

This sequence belongs to the TRAFAC class translation factor GTPase superfamily. Classic translation factor GTPase family. IF-2 subfamily.

It localises to the cytoplasm. In terms of biological role, one of the essential components for the initiation of protein synthesis. Protects formylmethionyl-tRNA from spontaneous hydrolysis and promotes its binding to the 30S ribosomal subunits. Also involved in the hydrolysis of GTP during the formation of the 70S ribosomal complex. The sequence is that of Translation initiation factor IF-2 from Pseudomonas fluorescens (strain SBW25).